The primary structure comprises 204 residues: Crossover junction endodeoxyribonuclease RuvC (204 aa).

Catalysis depends on residues Asp7, Glu68, and Asp141. Residues Asp7, Glu68, and Asp141 each coordinate Mg(2+).

It belongs to the RuvC family. As to quaternary structure, homodimer which binds Holliday junction (HJ) DNA. The HJ becomes 2-fold symmetrical on binding to RuvC with unstacked arms; it has a different conformation from HJ DNA in complex with RuvA. In the full resolvosome a probable DNA-RuvA(4)-RuvB(12)-RuvC(2) complex forms which resolves the HJ. It depends on Mg(2+) as a cofactor.

Its subcellular location is the cytoplasm. The enzyme catalyses Endonucleolytic cleavage at a junction such as a reciprocal single-stranded crossover between two homologous DNA duplexes (Holliday junction).. The RuvA-RuvB-RuvC complex processes Holliday junction (HJ) DNA during genetic recombination and DNA repair. Endonuclease that resolves HJ intermediates. Cleaves cruciform DNA by making single-stranded nicks across the HJ at symmetrical positions within the homologous arms, yielding a 5'-phosphate and a 3'-hydroxyl group; requires a central core of homology in the junction. The consensus cleavage sequence is 5'-(A/T)TT(C/G)-3'. Cleavage occurs on the 3'-side of the TT dinucleotide at the point of strand exchange. HJ branch migration catalyzed by RuvA-RuvB allows RuvC to scan DNA until it finds its consensus sequence, where it cleaves and resolves the cruciform DNA. This Clavibacter sepedonicus (Clavibacter michiganensis subsp. sepedonicus) protein is Crossover junction endodeoxyribonuclease RuvC.